The sequence spans 360 residues: MDIGIFIPIGNNGWLISSNAPQYMPTFELNKQIVQKAEGYGFDFALSMIKLRGFGGKTQFWEHNLESFTLMAGLAAVTSRIQLFATVATLTIPPAIAARMASTIDSISNGRFGINLVTGWQKPEYEQMGLWPGDEFFHTRYEYLAEYAQVLRDLWATGSSDFKGEHFSMQDCRVSPRPQADMKLICAGQSEAGMAFSAQYADYNFCFGKGVNTPTAFAPTAQKLLEANEKTGRNVTSCVLFMIIADDTDEAARARWEHIKDGADEEAIAWLSEKGSADKSAGSNLRQMADPTSAVNINMGTLVGSWATVARMLDEVASVPGTQGVMLTFDDFVKGVEDFGEKIQPLMTSRKHIAQLKEVV.

Residues 49–50, N115, E124, 140–141, and S190 contribute to the FMN site; these read IK and RY.

This sequence belongs to the NtaA/SnaA/DszA monooxygenase family. RutA subfamily.

It carries out the reaction uracil + FMNH2 + NADH + O2 = (Z)-3-ureidoacrylate + FMN + NAD(+) + H2O + H(+). It catalyses the reaction thymine + FMNH2 + NADH + O2 = (Z)-2-methylureidoacrylate + FMN + NAD(+) + H2O + H(+). Catalyzes the pyrimidine ring opening between N-3 and C-4 by an unusual flavin hydroperoxide-catalyzed mechanism, adding oxygen atoms in the process to yield ureidoacrylate peracid, that immediately reacts with FMN forming ureidoacrylate and FMN-N(5)-oxide. The FMN-N(5)-oxide reacts spontaneously with NADH to produce FMN. Requires the flavin reductase RutF to regenerate FMN in vivo. This Pseudomonas syringae pv. syringae (strain B728a) protein is Pyrimidine monooxygenase RutA.